Reading from the N-terminus, the 72-residue chain is uncharacterized protein (72 aa).

The protein belongs to the phage portal family. HK97 subfamily.

This is an uncharacterized protein from Rickettsia conorii (strain ATCC VR-613 / Malish 7).